Consider the following 464-residue polypeptide: Argininosuccinate lyase (464 aa).

The protein belongs to the lyase 1 family. Argininosuccinate lyase subfamily.

It is found in the cytoplasm. It catalyses the reaction 2-(N(omega)-L-arginino)succinate = fumarate + L-arginine. It participates in amino-acid biosynthesis; L-arginine biosynthesis; L-arginine from L-ornithine and carbamoyl phosphate: step 3/3. This is Argininosuccinate lyase from Pseudomonas aeruginosa (strain LESB58).